Here is a 206-residue protein sequence, read N- to C-terminus: Small ribosomal subunit protein uS7 (206 aa).

This sequence belongs to the universal ribosomal protein uS7 family. Component of the small ribosomal subunit.

The protein localises to the cytoplasm. Functionally, component of the small ribosomal subunit. The ribosome is a large ribonucleoprotein complex responsible for the synthesis of proteins in the cell. The chain is Small ribosomal subunit protein uS7 from Entamoeba histolytica (strain ATCC 30459 / HM-1:IMSS / ABRM).